Reading from the N-terminus, the 384-residue chain is Cyanate transport protein CynX (384 aa).

Transmembrane regions (helical) follow at residues 3–23, 34–54, 68–88, 89–109, 122–142, 153–173, 204–224, 235–255, 263–283, 287–307, 322–342, and 354–374; these read LVLV…GPLL, FSVA…LALA, VAIS…YPQS, ALLL…QAVM, PLVM…GAAI, WYQT…AWWW, YFGL…AFYI, SLLA…PAMA, LLML…WLPM, VLWA…CLLL, VAFM…FSGV, and WAFH…FAPV.

It belongs to the major facilitator superfamily. Cyanate porter (TC 2.A.1.17) family.

The protein resides in the cell inner membrane. In terms of biological role, this protein is part of an active transport system that transports exogenous cyanate into E.coli cells. In Escherichia coli (strain K12), this protein is Cyanate transport protein CynX (cynX).